The sequence spans 395 residues: Protein pelota (395 aa).

Residues 210–212 (PGF) carry the PGF motif motif. A disordered region spans residues 371–395 (PELEDSDDDDDEDGAAGGVADSDSD). Residues 372 to 384 (ELEDSDDDDDEDG) show a composition bias toward acidic residues.

It belongs to the eukaryotic release factor 1 family. Pelota subfamily. As to quaternary structure, component of the Pelota-HBS1L complex, also named Dom34-Hbs1 complex, composed of pelo and HBS1. Interacts with Pink1 and Cnot4; the interaction with Cnot4 appears to be Pink1-dependent. The cofactor is a divalent metal cation. As to expression, expressed in ovaries and muscles (at protein level). Expressed throughout all development stages.

The protein localises to the nucleus. Its subcellular location is the cytoplasm. In terms of biological role, component of the Pelota-HBS1L complex, a complex that recognizes stalled ribosomes and triggers the No-Go Decay (NGD) pathway. In the Pelota-HBS1L complex, pelo recognizes ribosomes stalled at the 3' end of an mRNA and engages stalled ribosomes by destabilizing mRNA in the mRNA channel. Following ribosome-binding, the Pelota-HBS1L complex promotes recruitment of pix, which drives the disassembly of stalled ribosomes, followed by degradation of damaged mRNAs as part of the NGD pathway. Required prior to the first meiotic division for spindle formation and nuclear envelope breakdown during spermatogenesis. Together with HBS1, promotes spermatid individualization during spermatogenesis. Required for ovarian germ line stem cell self-renewal and oocyte development during oogenesis. Together with HSB1, required for transposon silencing in the ovary and testis. As part of the Pink1-regulated signaling, is recruited to damaged mitochondrial and is required for recruitment of autophagy receptors and induction of mitophagy. Required for normal eye patterning and for mitotic divisions in the ovary. The protein is Protein pelota (pelo) of Drosophila melanogaster (Fruit fly).